Reading from the N-terminus, the 356-residue chain is Fructose-1,6-bisphosphatase class 1 (356 aa).

Residues 1–26 (MAREWPMTHPSNHPMDHHHQTLQAHL) form a disordered region. Mg(2+)-binding residues include glutamate 101, aspartate 120, leucine 122, and aspartate 123. Substrate-binding positions include 123–126 (DGSS) and asparagine 211. Mg(2+) is bound at residue glutamate 283.

The protein belongs to the FBPase class 1 family. Homotetramer. Mg(2+) serves as cofactor.

The protein resides in the cytoplasm. The enzyme catalyses beta-D-fructose 1,6-bisphosphate + H2O = beta-D-fructose 6-phosphate + phosphate. Its pathway is carbohydrate biosynthesis; Calvin cycle. This chain is Fructose-1,6-bisphosphatase class 1, found in Bradyrhizobium sp. (strain ORS 278).